Here is a 414-residue protein sequence, read N- to C-terminus: S-adenosylmethionine synthase (414 aa).

H11 is a binding site for ATP. Position 13 (D13) interacts with Mg(2+). A K(+)-binding site is contributed by E39. 2 residues coordinate L-methionine: E52 and Q95. The tract at residues 95 to 105 (QSPDIAQGVNL) is flexible loop. ATP contacts are provided by residues 169–171 (DGK), 245–246 (KF), D254, 260–261 (RK), A277, and K281. Residue D254 coordinates L-methionine. Residue K285 coordinates L-methionine.

It belongs to the AdoMet synthase family. In terms of assembly, homotetramer; dimer of dimers. It depends on Mg(2+) as a cofactor. K(+) serves as cofactor.

It is found in the cytoplasm. The catalysed reaction is L-methionine + ATP + H2O = S-adenosyl-L-methionine + phosphate + diphosphate. The protein operates within amino-acid biosynthesis; S-adenosyl-L-methionine biosynthesis; S-adenosyl-L-methionine from L-methionine: step 1/1. In terms of biological role, catalyzes the formation of S-adenosylmethionine (AdoMet) from methionine and ATP. The overall synthetic reaction is composed of two sequential steps, AdoMet formation and the subsequent tripolyphosphate hydrolysis which occurs prior to release of AdoMet from the enzyme. In Synechococcus sp. (strain JA-3-3Ab) (Cyanobacteria bacterium Yellowstone A-Prime), this protein is S-adenosylmethionine synthase.